We begin with the raw amino-acid sequence, 565 residues long: Adenine deaminase (565 aa).

The protein belongs to the metallo-dependent hydrolases superfamily. Adenine deaminase family. The cofactor is Mn(2+).

The catalysed reaction is adenine + H2O + H(+) = hypoxanthine + NH4(+). This chain is Adenine deaminase, found in Cereibacter sphaeroides (strain ATCC 17025 / ATH 2.4.3) (Rhodobacter sphaeroides).